Reading from the N-terminus, the 565-residue chain is NAD-dependent malic enzyme (565 aa).

Tyrosine 104 (proton donor) is an active-site residue. Arginine 157 lines the NAD(+) pocket. Lysine 175 acts as the Proton acceptor in catalysis. Residues glutamate 246, aspartate 247, and aspartate 270 each contribute to the a divalent metal cation site. NAD(+) contacts are provided by aspartate 270 and asparagine 418.

Belongs to the malic enzymes family. As to quaternary structure, homotetramer. The cofactor is Mg(2+). Mn(2+) serves as cofactor.

It catalyses the reaction (S)-malate + NAD(+) = pyruvate + CO2 + NADH. The enzyme catalyses oxaloacetate + H(+) = pyruvate + CO2. This Escherichia coli O139:H28 (strain E24377A / ETEC) protein is NAD-dependent malic enzyme.